The sequence spans 348 residues: MTTSGADGTKERRPVIALAMGDPAGISPELTARLLALSDIRDAAHIIAIGDRRILDEGARVAGVTLDLEAASLDALDNAGTARHVFVDLAHLDPADVVRGEATLAGGTFATRNFRTALELAHAGKADAVCFTPFNKKAMRFAYPGYDDEIRFVADVLSFTGKVREFNVLEKVWNARVTSHIPLKDVASHLSVEAILAELKLTQACLKDAGYEEAKIAVAGLNPHAGDGGSFGMEEIDIIEPAVEKARALGFNVEGPFPADTVFLRALKEGFNAVMTMYHDQGQIAMKIIGFDKGVTMMGGLPFPLCTPAHGTAYDIAGKGIADIGATREAILLAARMAKKKRALSAAA.

A divalent metal cation-binding residues include H180, H224, and H279.

The protein belongs to the PdxA family. As to quaternary structure, homodimer. It depends on Zn(2+) as a cofactor. Requires Mg(2+) as cofactor. Co(2+) serves as cofactor.

Its subcellular location is the cytoplasm. It catalyses the reaction 4-(phosphooxy)-L-threonine + NAD(+) = 3-amino-2-oxopropyl phosphate + CO2 + NADH. The protein operates within cofactor biosynthesis; pyridoxine 5'-phosphate biosynthesis; pyridoxine 5'-phosphate from D-erythrose 4-phosphate: step 4/5. In terms of biological role, catalyzes the NAD(P)-dependent oxidation of 4-(phosphooxy)-L-threonine (HTP) into 2-amino-3-oxo-4-(phosphooxy)butyric acid which spontaneously decarboxylates to form 3-amino-2-oxopropyl phosphate (AHAP). This Rhizobium meliloti (strain 1021) (Ensifer meliloti) protein is Putative 4-hydroxythreonine-4-phosphate dehydrogenase 2.